Consider the following 2172-residue polypeptide: DExH-box ATP-dependent RNA helicase DExH13 (2172 aa).

The tract at residues 20-83 (YKVNSSLVLN…KSKKKKERCD (64 aa)) is disordered. The segment covering 30–73 (SDERRRDTHESSGEPESLRGRIDPKSFGDRVVRGRPHELDERLN) has biased composition (basic and acidic residues). Residues 515 to 698 (GTALFKADNI…FLRVDLKNGL (184 aa)) enclose the Helicase ATP-binding 1 domain. 528 to 535 (APTGAGKT) is an ATP binding site. The DEIH box motif lies at 640–643 (DEIH). Residues 742 to 946 (GKHQVLIFVH…NAREACHWLG (205 aa)) enclose the Helicase C-terminal 1 domain. The SEC63 1 domain occupies 1007-1308 (TDLGRIASYY…KWLDSPTVLP (302 aa)). One can recognise a Helicase ATP-binding 2 domain in the interval 1361–1538 (TVLYNTSDNV…WIGASSCGVF (178 aa)). Residue 1374–1381 (APTGSGKT) participates in ATP binding. A DELH box motif is present at residues 1480 to 1483 (DELH). A Helicase C-terminal 2 domain is found at 1575–1772 (AIVQHAKNKK…NFNAEVVARV (198 aa)). The region spanning 1840–2157 (PLNLGMIASY…YLGCDQEYSF (318 aa)) is the SEC63 2 domain.

Its subcellular location is the nucleus. The enzyme catalyses ATP + H2O = ADP + phosphate + H(+). RNA helicase that plays an essential role in pre-mRNA splicing as component of the U5 snRNP and U4/U6-U5 tri-snRNP complexes. Involved in spliceosome assembly, activation and disassembly. In Arabidopsis thaliana (Mouse-ear cress), this protein is DExH-box ATP-dependent RNA helicase DExH13.